The primary structure comprises 932 residues: Protein translocase subunit SecA, chloroplastic (932 aa).

Residue 95-102 (MRTGEGKT) coordinates ATP. Residues 632 to 641 (HESRRVDNQL) are compositionally biased toward basic and acidic residues. Residues 632–653 (HESRRVDNQLRGRSGRQGDPGS) are disordered.

Belongs to the SecA family.

The protein localises to the plastid. Its subcellular location is the chloroplast stroma. It is found in the chloroplast thylakoid membrane. The catalysed reaction is ATP + H2O + chloroplast-proteinSide 1 = ADP + phosphate + chloroplast-proteinSide 2.. Has a central role in coupling the hydrolysis of ATP to the transfer of proteins across the thylakoid membrane. The chain is Protein translocase subunit SecA, chloroplastic from Ostreococcus lucimarinus (strain CCE9901).